Reading from the N-terminus, the 579-residue chain is Tricyclene synthase 0e23, chloroplastic (579 aa).

The N-terminal 66 residues, 1–66 (MAFCISYLGA…ALCLNAHSTS (66 aa)), are a transit peptide targeting the chloroplast. N-linked (GlcNAc...) asparagine glycosylation is found at Asn-27, Asn-204, and Asn-317. Positions 336 and 340 each coordinate Mg(2+). The short motif at 336 to 340 (DDIFD) is the DDXXD motif element. N-linked (GlcNAc...) asparagine glycans are attached at residues Asn-382 and Asn-463. Mg(2+) contacts are provided by Asn-480 and Glu-488. Residue Asn-507 is glycosylated (N-linked (GlcNAc...) asparagine).

This sequence belongs to the terpene synthase family. Tpsg subfamily. The cofactor is Mg(2+). Requires Mn(2+) as cofactor. In terms of tissue distribution, accumulates in flowers; mostly expressed in both upper and lower petal lobes, and, to a lower extent, in tube and stamens.

The protein resides in the plastid. It is found in the chloroplast stroma. The enzyme catalyses (2E)-geranyl diphosphate = tricyclene + diphosphate. The catalysed reaction is (2E)-geranyl diphosphate = (E)-beta-ocimene + diphosphate. It functions in the pathway secondary metabolite biosynthesis; terpenoid biosynthesis. Functionally, contributes to floral scent emission. The protein is Tricyclene synthase 0e23, chloroplastic (0e23) of Antirrhinum majus (Garden snapdragon).